An 804-amino-acid polypeptide reads, in one-letter code: Phenylalanine--tRNA ligase beta subunit (804 aa).

Residues 40-155 (GEGIKGVVIG…GDAETGADAL (116 aa)) form the tRNA-binding domain. One can recognise a B5 domain in the interval 409–484 (IKENVIRLSV…RLYGYDNIPS (76 aa)). Residues Asp-462, Asp-468, Glu-471, and Glu-472 each contribute to the Mg(2+) site. One can recognise an FDX-ACB domain in the interval 710-803 (PKYPSVTRDI…LEDKYQAVLR (94 aa)).

It belongs to the phenylalanyl-tRNA synthetase beta subunit family. Type 1 subfamily. Tetramer of two alpha and two beta subunits. The cofactor is Mg(2+).

It localises to the cytoplasm. The catalysed reaction is tRNA(Phe) + L-phenylalanine + ATP = L-phenylalanyl-tRNA(Phe) + AMP + diphosphate + H(+). This Bacillus licheniformis (strain ATCC 14580 / DSM 13 / JCM 2505 / CCUG 7422 / NBRC 12200 / NCIMB 9375 / NCTC 10341 / NRRL NRS-1264 / Gibson 46) protein is Phenylalanine--tRNA ligase beta subunit.